A 35-amino-acid chain; its full sequence is Small toxic polypeptide LdrB (35 aa).

Residues 10–30 traverse the membrane as a helical segment; it reads FWHDLAAPILAGIITAAIVGW.

It belongs to the Ldr toxic peptide family.

It localises to the cell inner membrane. In terms of biological role, toxic component of a type I toxin-antitoxin (TA) system. Overexpression causes rapid cell killing, probably by disrupting the cell inner membrane and disruption of ATP synthesis. The chain is Small toxic polypeptide LdrB (ldrB) from Escherichia coli (strain K12).